Here is a 1901-residue protein sequence, read N- to C-terminus: Protein TIC 214 (1901 aa).

6 helical membrane passes run 18-38 (IINS…FSIG), 64-84 (FITG…HLAL), 87-107 (PHTI…WNNH), 124-144 (LSIQ…HFIL), 172-192 (VGWL…LVWI), and 221-241 (IFSI…PSPI). Disordered stretches follow at residues 248–299 (EASK…EERW), 797–817 (REEQ…ENKR), and 1591–1618 (IQEA…LGPV). Over residues 256 to 268 (VESEEERDVEIET) the composition is skewed to acidic residues. The segment covering 1591–1611 (IQEAKEPASQGEKERGSDIEN) has biased composition (basic and acidic residues).

The protein belongs to the TIC214 family. In terms of assembly, part of the Tic complex.

It is found in the plastid. The protein localises to the chloroplast inner membrane. Functionally, involved in protein precursor import into chloroplasts. May be part of an intermediate translocation complex acting as a protein-conducting channel at the inner envelope. This is Protein TIC 214 from Nicotiana sylvestris (Wood tobacco).